The following is a 149-amino-acid chain: Oligosaccharyltransferase complex subunit OSTC (149 aa).

Topologically, residues 1 to 32 are cytoplasmic; it reads MESLYRVPFLVLECPNLKLKKPPWVHMPSAMT. A helical transmembrane segment spans residues 33 to 53; that stretch reads VYALVVVSYFLITGGIIYDVI. Residues 54–83 lie on the Extracellular side of the membrane; that stretch reads VEPPSVGSVTDEHGHQRPVAFLAYRVNGQY. A helical transmembrane segment spans residues 84–104; sequence IMEGLASSFLFTMGGLGFIIL. The Cytoplasmic portion of the chain corresponds to 105–117; the sequence is DRSNAPNIPKLNR. The helical transmembrane segment at 118 to 138 threads the bilayer; sequence FLLLFIGFVCVLLSFFMARVF. Topologically, residues 139-149 are extracellular; sequence MRMKLPGYLMG.

The protein belongs to the OSTC family. Component of STT3A-containing oligosaccharyl transferase (OST-A) complex. STT3A-containing complex assembly occurs through the formation of 3 subcomplexes. Subcomplex 1 contains RPN1 and TMEM258, subcomplex 2 contains the STT3A-specific subunits STT3A, DC2/OSTC, and KCP2 as well as the core subunit OST4, and subcomplex 3 contains RPN2, DAD1, and OST48. The OST-A complex can form stable complexes with the Sec61 complex or with both the Sec61 and TRAP complexes. Interacts with PSEN1 and NCSTN; indicative for an association with the gamma-secretase complex.

Its subcellular location is the endoplasmic reticulum. The protein resides in the membrane. It participates in protein modification; protein glycosylation. Subunit of STT3A-containing oligosaccharyl transferase (OST-A) complex that catalyzes the initial transfer of a defined glycan (Glc(3)Man(9)GlcNAc(2) in eukaryotes) from the lipid carrier dolichol-pyrophosphate to an asparagine residue within an Asn-X-Ser/Thr consensus motif in nascent polypeptide chains, the first step in protein N-glycosylation. N-glycosylation occurs cotranslationally and the complex associates with the Sec61 complex at the channel-forming translocon complex that mediates protein translocation across the endoplasmic reticulum (ER). Within the OST-A complex, acts as an adapter that anchors the OST-A complex to the Sec61 complex. May be involved in N-glycosylation of APP (amyloid-beta precursor protein). Can modulate gamma-secretase cleavage of APP by enhancing endoprotelysis of PSEN1. This chain is Oligosaccharyltransferase complex subunit OSTC, found in Bos taurus (Bovine).